Reading from the N-terminus, the 358-residue chain is tRNA-specific 2-thiouridylase MnmA (358 aa).

ATP is bound by residues 6 to 13 (ALSGGVDS) and Met-32. Cys-103 acts as the Nucleophile in catalysis. Residues Cys-103 and Cys-201 are joined by a disulfide bond. Position 127 (Gly-127) interacts with ATP. The segment at 151-153 (KDQ) is interaction with tRNA. The active-site Cysteine persulfide intermediate is Cys-201.

This sequence belongs to the MnmA/TRMU family.

The protein localises to the cytoplasm. It carries out the reaction S-sulfanyl-L-cysteinyl-[protein] + uridine(34) in tRNA + AH2 + ATP = 2-thiouridine(34) in tRNA + L-cysteinyl-[protein] + A + AMP + diphosphate + H(+). Functionally, catalyzes the 2-thiolation of uridine at the wobble position (U34) of tRNA, leading to the formation of s(2)U34. This Thermotoga maritima (strain ATCC 43589 / DSM 3109 / JCM 10099 / NBRC 100826 / MSB8) protein is tRNA-specific 2-thiouridylase MnmA.